The chain runs to 95 residues: Exodeoxyribonuclease 7 small subunit (95 aa).

Positions 65–95 are disordered; that stretch reads ETINPAETARPAKPENAPESPRMNDLFGTES.

The protein belongs to the XseB family. In terms of assembly, heterooligomer composed of large and small subunits.

The protein localises to the cytoplasm. The catalysed reaction is Exonucleolytic cleavage in either 5'- to 3'- or 3'- to 5'-direction to yield nucleoside 5'-phosphates.. Functionally, bidirectionally degrades single-stranded DNA into large acid-insoluble oligonucleotides, which are then degraded further into small acid-soluble oligonucleotides. This chain is Exodeoxyribonuclease 7 small subunit, found in Chlorobaculum tepidum (strain ATCC 49652 / DSM 12025 / NBRC 103806 / TLS) (Chlorobium tepidum).